The primary structure comprises 198 residues: Peptidyl-tRNA hydrolase (198 aa).

Tyr-18 is a tRNA binding site. Residue His-23 is the Proton acceptor of the active site. 3 residues coordinate tRNA: Tyr-69, Asn-71, and Asn-117.

The protein belongs to the PTH family. As to quaternary structure, monomer.

It is found in the cytoplasm. The enzyme catalyses an N-acyl-L-alpha-aminoacyl-tRNA + H2O = an N-acyl-L-amino acid + a tRNA + H(+). Functionally, hydrolyzes ribosome-free peptidyl-tRNAs (with 1 or more amino acids incorporated), which drop off the ribosome during protein synthesis, or as a result of ribosome stalling. Its function is as follows. Catalyzes the release of premature peptidyl moieties from peptidyl-tRNA molecules trapped in stalled 50S ribosomal subunits, and thus maintains levels of free tRNAs and 50S ribosomes. In Aeromonas hydrophila subsp. hydrophila (strain ATCC 7966 / DSM 30187 / BCRC 13018 / CCUG 14551 / JCM 1027 / KCTC 2358 / NCIMB 9240 / NCTC 8049), this protein is Peptidyl-tRNA hydrolase.